The following is a 405-amino-acid chain: Phosphopentomutase (405 aa).

The Mn(2+) site is built by Asp10, Asp297, His302, Asp338, His339, and His350.

It belongs to the phosphopentomutase family. Mn(2+) is required as a cofactor.

Its subcellular location is the cytoplasm. The enzyme catalyses 2-deoxy-alpha-D-ribose 1-phosphate = 2-deoxy-D-ribose 5-phosphate. It catalyses the reaction alpha-D-ribose 1-phosphate = D-ribose 5-phosphate. The protein operates within carbohydrate degradation; 2-deoxy-D-ribose 1-phosphate degradation; D-glyceraldehyde 3-phosphate and acetaldehyde from 2-deoxy-alpha-D-ribose 1-phosphate: step 1/2. In terms of biological role, isomerase that catalyzes the conversion of deoxy-ribose 1-phosphate (dRib-1-P) and ribose 1-phosphate (Rib-1-P) to deoxy-ribose 5-phosphate (dRib-5-P) and ribose 5-phosphate (Rib-5-P), respectively. The sequence is that of Phosphopentomutase from Pseudoalteromonas translucida (strain TAC 125).